Reading from the N-terminus, the 146-residue chain is MLLTVYLKDKQYYLFKLFREIWPSCTTECRICLETLGTEGGVVGVPDNGLLNLDKMFHAECIERWKRGRNRDPFNRAIKYYFAFPPPTLHECKALLEHTRGFIGDDEMDRVYSLVHQRVTTEDALDVELNFARFFKDDARAVGGGQ.

This is an uncharacterized protein from Orgyia pseudotsugata multicapsid polyhedrosis virus (OpMNPV).